Here is a 323-residue protein sequence, read N- to C-terminus: Cyclin-H (323 aa).

S5 bears the Phosphoserine; by CDK8 mark. A Phosphoserine modification is found at S132. The disordered stretch occupies residues 296-323 (GYEDDDYVSKKPKQEEEEWTDDDLVDAL). S304 bears the Phosphoserine; by CDK8 mark. Over residues 310-323 (EEEEWTDDDLVDAL) the composition is skewed to acidic residues. At T315 the chain carries Phosphothreonine.

The protein belongs to the cyclin family. Cyclin C subfamily. As to quaternary structure, associates primarily with CDK7 and MAT1 to form the CAK complex. CAK can further associate with the core-TFIIH to form the TFIIH basal transcription factor.

It is found in the nucleus. Its function is as follows. Regulates CDK7, the catalytic subunit of the CDK-activating kinase (CAK) enzymatic complex. CAK activates the cyclin-associated kinases CDK1, CDK2, CDK4 and CDK6 by threonine phosphorylation. CAK complexed to the core-TFIIH basal transcription factor activates RNA polymerase II by serine phosphorylation of the repetitive C-terminal domain (CTD) of its large subunit (POLR2A), allowing its escape from the promoter and elongation of the transcripts. Involved in cell cycle control and in RNA transcription by RNA polymerase II. Its expression and activity are constant throughout the cell cycle. This chain is Cyclin-H (Ccnh), found in Rattus norvegicus (Rat).